The chain runs to 72 residues: Large ribosomal subunit protein bL32c (72 aa).

Residues proline 49–glutamate 72 are disordered. The segment covering aspartate 59–glutamate 72 has biased composition (basic and acidic residues).

This sequence belongs to the bacterial ribosomal protein bL32 family.

Its subcellular location is the plastid. It localises to the chloroplast. The sequence is that of Large ribosomal subunit protein bL32c from Ostreococcus tauri.